The primary structure comprises 882 residues: Homeobox-leucine zipper protein ROC3 (882 aa).

The tract at residues 104–144 is disordered; sequence DVDDDHKPQHSGHDQPPDAAQPSGAAGGNAKKKRYHRHTAH. Over residues 107-119 the composition is skewed to basic and acidic residues; sequence DDHKPQHSGHDQP. The span at 133 to 143 shows a compositional bias: basic residues; that stretch reads AKKKRYHRHTA. Positions 134–193 form a DNA-binding region, homeobox; sequence KKKRYHRHTAHQIQQMEALFKECPHPDDKQRLKLSQELGLKPRQVKFWFQNRRTQMKAQQ. Residues 200-263 are a coiled coil; that stretch reads ILRAENENLK…LDRLACIATR (64 aa). The 245-residue stretch at 340–584 folds into the START domain; it reads QEQDKQLVVD…LQRQCERLAS (245 aa). The segment covering 782 to 816 has biased composition (low complexity); it reads AAAPTISSSTTTTTGNGNGETSSTPPRNSSSNNNN. Positions 782 to 820 are disordered; the sequence is AAAPTISSSTTTTTGNGNGETSSTPPRNSSSNNNNADEL.

It belongs to the HD-ZIP homeobox family. Class IV subfamily.

It localises to the nucleus. Probable transcription factor. This Oryza sativa subsp. indica (Rice) protein is Homeobox-leucine zipper protein ROC3 (ROC3).